The sequence spans 273 residues: Cell division protein FtsQ (273 aa).

The Cytoplasmic segment spans residues 1 to 20; that stretch reads MPPRKAHTTRRTPAKKSGVR. A helical transmembrane segment spans residues 21-43; the sequence is RRLLRLLVTGVPVLALCGVAWLW. Residues 44 to 273 are Periplasmic-facing; sequence LESVRLTRIE…STQKSAMGHE (230 aa). The 69-residue stretch at 47–115 folds into the POTRA domain; it reads VRLTRIEIVG…GTLRIAVEER (69 aa).

The protein belongs to the FtsQ/DivIB family. FtsQ subfamily.

It is found in the cell inner membrane. Its function is as follows. Essential cell division protein. The protein is Cell division protein FtsQ of Rhodothermus marinus (strain ATCC 43812 / DSM 4252 / R-10) (Rhodothermus obamensis).